The primary structure comprises 313 residues: Pyrimidine-specific ribonucleoside hydrolase RihB (313 aa).

Asp-11 functions as the Proton acceptor in the catalytic mechanism. Asp-11, Asp-16, and Val-124 together coordinate Ca(2+). Gln-227 and His-239 together coordinate substrate. Asp-240 serves as a coordination point for Ca(2+).

Belongs to the IUNH family. RihB subfamily. As to quaternary structure, homotetramer. It depends on Ca(2+) as a cofactor.

It carries out the reaction a pyrimidine ribonucleoside + H2O = a pyrimidine nucleobase + D-ribose. In terms of biological role, hydrolyzes cytidine or uridine to ribose and cytosine or uracil, respectively. Has a clear preference for cytidine over uridine. Strictly specific for ribonucleosides. This is Pyrimidine-specific ribonucleoside hydrolase RihB from Escherichia coli O17:K52:H18 (strain UMN026 / ExPEC).